The chain runs to 334 residues: TPR repeat-containing protein MJ0798 (334 aa).

TPR repeat units lie at residues 102 to 135 (WKLWKNLGDKAYLWKAYYEALFCYNKALELNQNT), 137 to 168 (LLCKKGYALLKLYKRDLAIKYFEKASEKDRNN), 169 to 202 (YKALFGLGKSYYLMSDNKNSIKYFEKVLELNPND), 204 to 235 (EALEYLGELYYEEDCEKAINYFKKALELKPDD), 236 to 269 (IDLILKVAFTYFKLKKYKHALKYFEKALKLNPNV), 273 to 306 (EQIYESMGRIYIYLGEDEKAIECFEKLKEINLYH), and 308 to 333 (EIYEIIALTYEEVGNIEKAKEFYKKL).

The sequence is that of TPR repeat-containing protein MJ0798 from Methanocaldococcus jannaschii (strain ATCC 43067 / DSM 2661 / JAL-1 / JCM 10045 / NBRC 100440) (Methanococcus jannaschii).